Reading from the N-terminus, the 129-residue chain is DNA-directed RNA polymerase subunit omega (129 aa).

The interval Val77–Ile98 is disordered.

This sequence belongs to the RNA polymerase subunit omega family. As to quaternary structure, the RNAP catalytic core consists of 2 alpha, 1 beta, 1 beta' and 1 omega subunit. When a sigma factor is associated with the core the holoenzyme is formed, which can initiate transcription.

The catalysed reaction is RNA(n) + a ribonucleoside 5'-triphosphate = RNA(n+1) + diphosphate. In terms of biological role, promotes RNA polymerase assembly. Latches the N- and C-terminal regions of the beta' subunit thereby facilitating its interaction with the beta and alpha subunits. The chain is DNA-directed RNA polymerase subunit omega from Methylocella silvestris (strain DSM 15510 / CIP 108128 / LMG 27833 / NCIMB 13906 / BL2).